The following is a 152-amino-acid chain: Large ribosomal subunit protein uL13 (152 aa).

It belongs to the universal ribosomal protein uL13 family. As to quaternary structure, part of the 50S ribosomal subunit.

This protein is one of the early assembly proteins of the 50S ribosomal subunit, although it is not seen to bind rRNA by itself. It is important during the early stages of 50S assembly. This chain is Large ribosomal subunit protein uL13, found in Wolbachia sp. subsp. Drosophila simulans (strain wRi).